An 82-amino-acid chain; its full sequence is Sec-independent protein translocase protein TatA (82 aa).

The chain crosses the membrane as a helical span at residues 1 to 21 (MHPPSITQLLIILLIIVLLFG). The disordered stretch occupies residues 42–82 (AVKEDEEDNQSEENTKSQIKQSESKNENVSKTHTDSQKQDT). The span at 63–82 (SESKNENVSKTHTDSQKQDT) shows a compositional bias: basic and acidic residues.

Belongs to the TatA/E family. As to quaternary structure, the Tat system comprises two distinct complexes: a TatABC complex, containing multiple copies of TatA, TatB and TatC subunits, and a separate TatA complex, containing only TatA subunits. Substrates initially bind to the TatABC complex, which probably triggers association of the separate TatA complex to form the active translocon.

The protein localises to the cell inner membrane. Part of the twin-arginine translocation (Tat) system that transports large folded proteins containing a characteristic twin-arginine motif in their signal peptide across membranes. TatA could form the protein-conducting channel of the Tat system. This Helicobacter hepaticus (strain ATCC 51449 / 3B1) protein is Sec-independent protein translocase protein TatA.